The primary structure comprises 1048 residues: Putative structural protein ORF84 (1048 aa).

It belongs to the ascovirus HvAV ORF146 family.

Its subcellular location is the virion. In Spodoptera frugiperda ascovirus 1a (SfAV-1a), this protein is Putative structural protein ORF84.